A 323-amino-acid chain; its full sequence is Fructose-1,6-bisphosphatase class 1 (323 aa).

Mg(2+) is bound by residues Glu-84, Asp-103, Leu-105, and Asp-106. Residues 106-109 (DGSS), Asn-198, and Lys-264 contribute to the substrate site. Residue Glu-270 coordinates Mg(2+).

The protein belongs to the FBPase class 1 family. As to quaternary structure, homotetramer. Requires Mg(2+) as cofactor.

The protein resides in the cytoplasm. It catalyses the reaction beta-D-fructose 1,6-bisphosphate + H2O = beta-D-fructose 6-phosphate + phosphate. It participates in carbohydrate biosynthesis; gluconeogenesis. The polypeptide is Fructose-1,6-bisphosphatase class 1 (Pseudoalteromonas atlantica (strain T6c / ATCC BAA-1087)).